Consider the following 690-residue polypeptide: MDDSSLYIHRELSQLQFNIRVLEQALDESYPLLERLKFLLIFSSNLDEFFEIRIAGLKKQITFAREQAGADGLLPHQALARISELVHEQVSRQYRILNETLLPELAKHQIRFIRRRHWTLKIKTWVRRFFRDEIAPIITPIGLDPTHPFPLLVNKSLNFIVELEGMDAFGRDSGLAIIPAPRLLPRIIRLPEDVGGEGDNYVFLSSMIHAHADDLFPGMKVKGCYQFRLTRNADLSVDTEDVEDLARALRGELFSRRYGDAVRLEVVDTCPQNLTNYLLKQFGLSESELYKVSGPVNLTRLFSVTGLESHPELQYPPFTPAIPRLLQKKENLFNVLSKLDVLLMHPFESFTPVIDLLRQAAKDPNVLAIKQTLYRSGANSEIVDALVEAARNGKEVTAVIELRARFDEESNLQLASRLQQAGAVVIYGVVGFKTHAKMMLILRREDGELRRYAHLGTGNYHAGNARLYTDYSLLTADVALCEDLHKLFNQLIGMGKTLRMKKLLHAPFTLKKNLLEMINREAAQAALGQPAHIMAKVNSLTDPKVIRALYKASQAGVRIDLVVRGMCCLRPGIPGVSHNIHVRSIIGRFLEHSRIYYFLNGGDEKLYLSSADWMERNLDMRVETCFPVEGKKLVQRVKKELETYLTDNTQAWVLQADGSYQRLSPTGNQNPRNTQATLLEKLAAPVLTAR.

Position 45 (asparagine 45) interacts with ATP. Positions 375 and 405 each coordinate Mg(2+). Histidine 435 acts as the Phosphohistidine intermediate in catalysis. 3 residues coordinate ATP: tyrosine 468, arginine 564, and histidine 592.

This sequence belongs to the polyphosphate kinase 1 (PPK1) family. It depends on Mg(2+) as a cofactor. An intermediate of this reaction is the autophosphorylated ppk in which a phosphate is covalently linked to a histidine residue through a N-P bond.

The enzyme catalyses [phosphate](n) + ATP = [phosphate](n+1) + ADP. In terms of biological role, catalyzes the reversible transfer of the terminal phosphate of ATP to form a long-chain polyphosphate (polyP). This Pseudomonas aeruginosa (strain ATCC 15692 / DSM 22644 / CIP 104116 / JCM 14847 / LMG 12228 / 1C / PRS 101 / PAO1) protein is Polyphosphate kinase.